A 230-amino-acid polypeptide reads, in one-letter code: Orotidine 5'-phosphate decarboxylase (230 aa).

Substrate contacts are provided by residues aspartate 11, lysine 34, 61 to 70 (DLKLHDIPNT), threonine 117, arginine 179, glutamine 188, glycine 208, and arginine 209. Lysine 63 (proton donor) is an active-site residue.

It belongs to the OMP decarboxylase family. Type 1 subfamily. Homodimer.

The catalysed reaction is orotidine 5'-phosphate + H(+) = UMP + CO2. Its pathway is pyrimidine metabolism; UMP biosynthesis via de novo pathway; UMP from orotate: step 2/2. Functionally, catalyzes the decarboxylation of orotidine 5'-monophosphate (OMP) to uridine 5'-monophosphate (UMP). The protein is Orotidine 5'-phosphate decarboxylase of Streptococcus equi subsp. zooepidemicus (strain MGCS10565).